A 568-amino-acid chain; its full sequence is Tyrosine-protein kinase transforming protein Src (568 aa).

The tract at residues 1-58 (MGSSKSKPKDPSQRRRSLEPPDSTHHGGFPASQTPNKTAAPDTHRTPSRSFGTVATEP) is disordered. Gly-2 carries N-myristoyl glycine; by host lipidation. The span at 7–25 (KPKDPSQRRRSLEPPDSTH) shows a compositional bias: basic and acidic residues. Residues 81–142 (GGVTTFVALY…PSNYVAPSDS (62 aa)) form the SH3 domain. Residues 148–245 (WYFGKITRRE…GLCHRLTNVC (98 aa)) form the SH2 domain. Residues 267-520 (LRLEVKLGQG…YLQAFLEDYF (254 aa)) form the Protein kinase domain. ATP-binding positions include 273–281 (LGQGCFGEV) and Lys-295. The active-site Proton acceptor is the Asp-386. Tyr-416 is modified (phosphotyrosine; by autocatalysis).

It belongs to the protein kinase superfamily. Tyr protein kinase family. SRC subfamily. The phosphorylated form is termed pp60v-src.

It carries out the reaction L-tyrosyl-[protein] + ATP = O-phospho-L-tyrosyl-[protein] + ADP + H(+). Functionally, this phosphoprotein, required for both the initiation and the maintenance of neoplastic transformation, is a protein kinase that catalyzes the phosphorylation of tyrosine residues in vitro. This chain is Tyrosine-protein kinase transforming protein Src (V-SRC), found in Galliformes.